The chain runs to 339 residues: Nicotinate-nucleotide--dimethylbenzimidazole phosphoribosyltransferase (339 aa).

Residue E306 is the Proton acceptor of the active site.

It belongs to the CobT family.

The enzyme catalyses 5,6-dimethylbenzimidazole + nicotinate beta-D-ribonucleotide = alpha-ribazole 5'-phosphate + nicotinate + H(+). The protein operates within nucleoside biosynthesis; alpha-ribazole biosynthesis; alpha-ribazole from 5,6-dimethylbenzimidazole: step 1/2. In terms of biological role, catalyzes the synthesis of alpha-ribazole-5'-phosphate from nicotinate mononucleotide (NAMN) and 5,6-dimethylbenzimidazole (DMB). In Brucella melitensis biotype 1 (strain ATCC 23456 / CCUG 17765 / NCTC 10094 / 16M), this protein is Nicotinate-nucleotide--dimethylbenzimidazole phosphoribosyltransferase.